A 353-amino-acid chain; its full sequence is MTNYFRSNVEAMASYVPGEQPPQGTQVIKLNSNENPYPPSPEALAAIKDIDGECLRRYPEPFGEEFRKAVSQLLGVPCNWVIVGNGSDEILSIVIRACAEPTRKVVYPVPTYVLYRTLTEMQAADILEIPYREYNILPVADLIAAHGSVTFIASPNSPSGHVVPSDDLRKLASELSGVLVIDEAYVDFAEESALNLVQDHENVILIRTLSKGYSLAGLRLGFGVGNPQLLNGLFKVKDSYNVDAIACKVATAAITDQAYKNACVAKVKASRTRLAKDLKQLGFCVWDSQANFLLTQPPQGNAEYLYQQLREKKILIRYFKQPGLEDKLRITVGTDEQNQILLQALRDLLESRD.

Lys-211 bears the N6-(pyridoxal phosphate)lysine mark.

The protein belongs to the class-II pyridoxal-phosphate-dependent aminotransferase family. Histidinol-phosphate aminotransferase subfamily. As to quaternary structure, homodimer. Pyridoxal 5'-phosphate is required as a cofactor.

The enzyme catalyses L-histidinol phosphate + 2-oxoglutarate = 3-(imidazol-4-yl)-2-oxopropyl phosphate + L-glutamate. It participates in amino-acid biosynthesis; L-histidine biosynthesis; L-histidine from 5-phospho-alpha-D-ribose 1-diphosphate: step 7/9. The protein is Histidinol-phosphate aminotransferase 1 (hisC1) of Nostoc sp. (strain PCC 7120 / SAG 25.82 / UTEX 2576).